Here is a 333-residue protein sequence, read N- to C-terminus: Holliday junction branch migration complex subunit RuvB (333 aa).

Residues 1–182 form a large ATPase domain (RuvB-L) region; sequence MDERLLSQSH…FGVTLKLEYY (182 aa). ATP contacts are provided by residues Leu-21, Arg-22, Gly-63, Lys-66, Thr-67, Thr-68, 129–131, Arg-172, Tyr-182, and Arg-219; that span reads EDY. A Mg(2+)-binding site is contributed by Thr-67. The small ATPAse domain (RuvB-S) stretch occupies residues 183–253; it reads ETHELAAIVS…LASDALDRLH (71 aa). The segment at 256-333 is head domain (RuvB-H); that stretch reads ALGLDEVDHR…SHFGYEEEEE (78 aa). Arg-311 and Arg-316 together coordinate DNA.

The protein belongs to the RuvB family. As to quaternary structure, homohexamer. Forms an RuvA(8)-RuvB(12)-Holliday junction (HJ) complex. HJ DNA is sandwiched between 2 RuvA tetramers; dsDNA enters through RuvA and exits via RuvB. An RuvB hexamer assembles on each DNA strand where it exits the tetramer. Each RuvB hexamer is contacted by two RuvA subunits (via domain III) on 2 adjacent RuvB subunits; this complex drives branch migration. In the full resolvosome a probable DNA-RuvA(4)-RuvB(12)-RuvC(2) complex forms which resolves the HJ.

The protein localises to the cytoplasm. It catalyses the reaction ATP + H2O = ADP + phosphate + H(+). Its function is as follows. The RuvA-RuvB-RuvC complex processes Holliday junction (HJ) DNA during genetic recombination and DNA repair, while the RuvA-RuvB complex plays an important role in the rescue of blocked DNA replication forks via replication fork reversal (RFR). RuvA specifically binds to HJ cruciform DNA, conferring on it an open structure. The RuvB hexamer acts as an ATP-dependent pump, pulling dsDNA into and through the RuvAB complex. RuvB forms 2 homohexamers on either side of HJ DNA bound by 1 or 2 RuvA tetramers; 4 subunits per hexamer contact DNA at a time. Coordinated motions by a converter formed by DNA-disengaged RuvB subunits stimulates ATP hydrolysis and nucleotide exchange. Immobilization of the converter enables RuvB to convert the ATP-contained energy into a lever motion, pulling 2 nucleotides of DNA out of the RuvA tetramer per ATP hydrolyzed, thus driving DNA branch migration. The RuvB motors rotate together with the DNA substrate, which together with the progressing nucleotide cycle form the mechanistic basis for DNA recombination by continuous HJ branch migration. Branch migration allows RuvC to scan DNA until it finds its consensus sequence, where it cleaves and resolves cruciform DNA. The chain is Holliday junction branch migration complex subunit RuvB from Exiguobacterium sp. (strain ATCC BAA-1283 / AT1b).